An 885-amino-acid polypeptide reads, in one-letter code: Putative membrane protein YdgH (885 aa).

The next 7 membrane-spanning stretches (helical) occupy residues 9 to 29, 181 to 201, 202 to 222, 227 to 247, 278 to 298, 304 to 324, and 354 to 374; these read WAIA…SPNL, IIGL…PIVV, VGFS…NVDF, FTQT…CILL, ISGF…FAIF, VAVG…LFMV, and VARP…FILT. The disordered stretch occupies residues 498-518; sequence MAGQTGSASNGGSGGSLGDAA. A run of 5 helical transmembrane segments spans residues 716–736, 740–760, 772–792, 817–837, and 847–867; these read MVIM…SMIM, MIAS…LIFV, VPFF…IFLL, VIIT…PSGV, and IIIG…PAII.

It belongs to the resistance-nodulation-cell division (RND) (TC 2.A.6) family. MmpL subfamily.

It localises to the cell membrane. The polypeptide is Putative membrane protein YdgH (ydgH) (Bacillus subtilis (strain 168)).